The sequence spans 735 residues: Capsid protein (735 aa).

Disordered regions lie at residues 577-604 (VVRN…DPKY) and 632-695 (QQAS…TVEQ). Basic and acidic residues predominate over residues 649 to 666 (EIKGLTEADQEAEKDSGL). The segment covering 676–685 (SSQETQSEQE) has biased composition (low complexity).

The protein belongs to the anelloviridae capsid protein family.

It is found in the virion. Its function is as follows. Self assemble to form an icosahedral capsid. The protein is Capsid protein of Pan troglodytes (Chimpanzee).